The primary structure comprises 473 residues: MTAKPGFNDYIVKDISLAEFGRKEISLAETEMPGLMATREEYGPKQPLKGARIAGSLHMTIQTAVLIETLAALGADIRWVSCNIYSTQDHAAAAIAAAGIPVFAVKGETLADYWDYTAKLFDWHGGGHPNMILDDGGDATMYVHLGLRAENGDTAFLDKPASEEEEVFFALLKKQLKEKPKGYFAAIAASIKGVSEETTTGVHRLYDMQKAGTLLWPAINVNDSVTKSKFDNLYGCRESLVDGIRRGTDVMMSGKVAMVAGFGDVGKGSAASLRQAGCRVLVSEIDPICALQAAMEGYEVVTMEDAAPRADIFVTATGNKDIITIEHMRAMKDRAIVCNIGHFDNEIQVASLKNLKWTNIKPQVDEITFPDGKRMILLSEGRLVNLGNAMGHPSFVMSASFTNQTLAQIELYANNKDGKYKKEVYVLPKSLDEKVARLHLAKIGVKLTELRPDQAAYIGVKQEGPFKSDHYRY.

Residues Thr60, Asp135, and Glu197 each coordinate substrate. An NAD(+)-binding site is contributed by 198–200 (TTT). Positions 227 and 231 each coordinate substrate. Residues Asn232, 261–266 (GFGDVG), Glu284, Asn319, 340–342 (IGH), and Asn385 each bind NAD(+).

This sequence belongs to the adenosylhomocysteinase family. The cofactor is NAD(+).

The protein localises to the cytoplasm. The enzyme catalyses S-adenosyl-L-homocysteine + H2O = L-homocysteine + adenosine. Its pathway is amino-acid biosynthesis; L-homocysteine biosynthesis; L-homocysteine from S-adenosyl-L-homocysteine: step 1/1. Functionally, may play a key role in the regulation of the intracellular concentration of adenosylhomocysteine. This Bradyrhizobium sp. (strain BTAi1 / ATCC BAA-1182) protein is Adenosylhomocysteinase.